A 47-amino-acid chain; its full sequence is Large ribosomal subunit protein bL33A (47 aa).

It belongs to the bacterial ribosomal protein bL33 family.

In Staphylococcus aureus (strain JH1), this protein is Large ribosomal subunit protein bL33A.